The primary structure comprises 403 residues: MSGLGWMKENWRLLVITAVWIVAATSLAVKGVNLGLELKGGTMVIAKTDHPVSKKEMDQTVTVLESRLSTFGFKGIKIQPVGRDHIIVMLPGTPPKEAVELITKPGRFEAKYKGKTVITGQDIESVESPRIERVEGGYQWSVPFRLTAEGARKFAEVAKNAPGQPIDMYLDNKKVSSPRISEDLAMAAASGHMEREIEIVGGAKTKEQAEREAKEIMAVLRSGQLPAKLVPEGVYSVSATLGQNFLKMAMIAGAIAFAAVSVIIALRYRDIRISGPILFTGSSEVVFLIGLASLTGFTIDLPALAGIILSIGSGVDDLIVITDEIVRGERRKEEVTLRQRIKRAFSVVLASFATLAAAMAVLFVAGMGLLKGFAIMTIAGAFYGVVITRPVYADLLKKILGTE.

6 helical membrane passes run 13–33, 245–265, 285–305, 306–326, 347–367, and 368–388; these read LLVITAVWIVAATSLAVKGVN, FLKMAMIAGAIAFAAVSVIIA, VVFLIGLASLTGFTIDLPALA, GIILSIGSGVDDLIVITDEIV, VVLASFATLAAAMAVLFVAGM, and GLLKGFAIMTIAGAFYGVVIT.

It belongs to the SecD/SecF family. SecD subfamily. Part of the protein translocation apparatus. Forms a complex with SecF.

It localises to the cell membrane. In terms of biological role, involved in protein export. The sequence is that of Protein-export membrane protein SecD from Methanopyrus kandleri (strain AV19 / DSM 6324 / JCM 9639 / NBRC 100938).